Consider the following 476-residue polypeptide: Viral inhibitor of caspase-8-induced apoptosis (476 aa).

Belongs to the herpesviridae US22 family. Interacts with host pro-caspase-8/CASP8; this interaction inhibits CASP8 activation.

In terms of biological role, plays a role in the inhibition of apoptosis by interacting with the pro-domain of pro-caspase-8/CASP8 and thus preventing its activation. The chain is Viral inhibitor of caspase-8-induced apoptosis (UL36) from Human cytomegalovirus (strain Merlin) (HHV-5).